The following is a 139-amino-acid chain: D-ribose pyranase (139 aa).

Histidine 20 functions as the Proton donor in the catalytic mechanism. Substrate contacts are provided by residues aspartate 28, histidine 106, and 128–130; that span reads YAN.

It belongs to the RbsD / FucU family. RbsD subfamily. In terms of assembly, homodecamer.

It localises to the cytoplasm. The catalysed reaction is beta-D-ribopyranose = beta-D-ribofuranose. The protein operates within carbohydrate metabolism; D-ribose degradation; D-ribose 5-phosphate from beta-D-ribopyranose: step 1/2. Catalyzes the interconversion of beta-pyran and beta-furan forms of D-ribose. The polypeptide is D-ribose pyranase (Escherichia coli O127:H6 (strain E2348/69 / EPEC)).